The sequence spans 420 residues: DNA repair protein NreA (420 aa).

Residues 413-420 (QTDIFDFA) carry the PIP motif motif.

Belongs to the Nre family. As to quaternary structure, interacts with the DNA polymerase sliding clamp (PCNA) via the PIP (PCNA-interacting peptide) motif.

Its function is as follows. Involved in DNA damage repair. Works together with the UvrABC proteins in repairing DNA damage resulting from exposure to the DNA damaging agent mitomycin C (MMC). The chain is DNA repair protein NreA from Haloferax volcanii (strain ATCC 29605 / DSM 3757 / JCM 8879 / NBRC 14742 / NCIMB 2012 / VKM B-1768 / DS2) (Halobacterium volcanii).